Consider the following 353-residue polypeptide: Uroporphyrinogen decarboxylase (353 aa).

Substrate-binding positions include Arg29 to Arg33, Asp78, Tyr154, Ser209, and His322.

The protein belongs to the uroporphyrinogen decarboxylase family. In terms of assembly, homodimer.

Its subcellular location is the cytoplasm. The enzyme catalyses uroporphyrinogen III + 4 H(+) = coproporphyrinogen III + 4 CO2. It functions in the pathway porphyrin-containing compound metabolism; protoporphyrin-IX biosynthesis; coproporphyrinogen-III from 5-aminolevulinate: step 4/4. Catalyzes the decarboxylation of four acetate groups of uroporphyrinogen-III to yield coproporphyrinogen-III. This is Uroporphyrinogen decarboxylase from Bacillus velezensis (strain DSM 23117 / BGSC 10A6 / LMG 26770 / FZB42) (Bacillus amyloliquefaciens subsp. plantarum).